Consider the following 358-residue polypeptide: PqqA peptide cyclase (358 aa).

The 216-residue stretch at 4–219 (PSPPMSLLAE…VEAERAKGGL (216 aa)) folds into the Radical SAM core domain. The [4Fe-4S] cluster site is built by cysteine 18, cysteine 22, and cysteine 25.

Belongs to the radical SAM superfamily. PqqE family. Interacts with PqqD. The interaction is necessary for activity of PqqE. It depends on [4Fe-4S] cluster as a cofactor.

It carries out the reaction [PQQ precursor protein] + S-adenosyl-L-methionine = E-Y cross-linked-[PQQ precursor protein] + 5'-deoxyadenosine + L-methionine + H(+). The protein operates within cofactor biosynthesis; pyrroloquinoline quinone biosynthesis. Its function is as follows. Catalyzes the cross-linking of a glutamate residue and a tyrosine residue in the PqqA protein as part of the biosynthesis of pyrroloquinoline quinone (PQQ). The sequence is that of PqqA peptide cyclase from Gluconobacter oxydans (strain 621H) (Gluconobacter suboxydans).